The sequence spans 103 residues: Large ribosomal subunit protein uL24 (103 aa).

This sequence belongs to the universal ribosomal protein uL24 family. In terms of assembly, part of the 50S ribosomal subunit.

Functionally, one of two assembly initiator proteins, it binds directly to the 5'-end of the 23S rRNA, where it nucleates assembly of the 50S subunit. Its function is as follows. One of the proteins that surrounds the polypeptide exit tunnel on the outside of the subunit. The chain is Large ribosomal subunit protein uL24 from Synechococcus sp. (strain CC9311).